Here is a 129-residue protein sequence, read N- to C-terminus: Small ribosomal subunit protein uS11 (129 aa).

This sequence belongs to the universal ribosomal protein uS11 family. As to quaternary structure, part of the 30S ribosomal subunit. Interacts with proteins S7 and S18. Binds to IF-3.

Functionally, located on the platform of the 30S subunit, it bridges several disparate RNA helices of the 16S rRNA. Forms part of the Shine-Dalgarno cleft in the 70S ribosome. This is Small ribosomal subunit protein uS11 from Yersinia enterocolitica serotype O:8 / biotype 1B (strain NCTC 13174 / 8081).